A 931-amino-acid chain; its full sequence is Netrin receptor UNC5C (931 aa).

The first 39 residues, Met-1–Ala-39, serve as a signal peptide directing secretion. The Extracellular segment spans residues Ala-40 to Tyr-380. One can recognise an Ig-like domain in the interval Pro-62–Tyr-159. 9 disulfide bridges follow: Cys-83/Cys-144, Cys-95/Cys-142, Cys-188/Cys-239, Cys-272/Cys-309, Cys-276/Cys-313, Cys-287/Cys-299, Cys-328/Cys-362, Cys-332/Cys-367, and Cys-340/Cys-352. An Ig-like C2-type domain is found at Arg-161 to Ile-256. N-linked (GlcNAc...) asparagine glycosylation is present at Asn-236. TSP type-1 domains are found at residues Asn-260–Pro-314 and Asp-316–Met-368. Asn-361 carries an N-linked (GlcNAc...) asparagine glycan. A helical membrane pass occupies residues Val-381–Val-401. Over Tyr-402 to Tyr-931 the chain is Cytoplasmic. The ZU5 domain occupies Cys-530 to Leu-664. In terms of domain architecture, Death spans Gln-850–Gly-929.

The protein belongs to the unc-5 family. In terms of tissue distribution, restricted to proprioceptive neurons.

The protein localises to the cell membrane. It localises to the cell surface. The protein resides in the synapse. It is found in the synaptosome. Its subcellular location is the cell projection. The protein localises to the axon. It localises to the dendrite. The protein resides in the growth cone. It is found in the lamellipodium. Its subcellular location is the filopodium. Its function is as follows. Receptor for netrin required for axon guidance. Mediates axon repulsion of neuronal growth cones in the developing nervous system upon ligand binding. Involved in dorsal root ganglion axon projection towards the spinal cord. This chain is Netrin receptor UNC5C (UNC5C), found in Gallus gallus (Chicken).